The sequence spans 301 residues: Ribosomal protein L11 methyltransferase (301 aa).

4 residues coordinate S-adenosyl-L-methionine: threonine 146, glycine 167, aspartate 189, and asparagine 234.

It belongs to the methyltransferase superfamily. PrmA family.

Its subcellular location is the cytoplasm. It catalyses the reaction L-lysyl-[protein] + 3 S-adenosyl-L-methionine = N(6),N(6),N(6)-trimethyl-L-lysyl-[protein] + 3 S-adenosyl-L-homocysteine + 3 H(+). Functionally, methylates ribosomal protein L11. The protein is Ribosomal protein L11 methyltransferase of Acinetobacter baumannii (strain SDF).